Reading from the N-terminus, the 342-residue chain is Delta-aminolevulinic acid dehydratase (342 aa).

Zn(2+)-binding residues include Cys133, Cys135, and Cys143. Lys210 functions as the Schiff-base intermediate with substrate in the catalytic mechanism. 5-aminolevulinate contacts are provided by Arg220 and Arg232. The residue at position 254 (Ser254) is a Phosphoserine. The active-site Schiff-base intermediate with substrate is Lys263. 5-aminolevulinate-binding residues include Ser290 and Tyr329.

It belongs to the ALAD family. As to quaternary structure, homooctamer. The cofactor is Zn(2+).

It carries out the reaction 2 5-aminolevulinate = porphobilinogen + 2 H2O + H(+). It participates in porphyrin-containing compound metabolism; protoporphyrin-IX biosynthesis; coproporphyrinogen-III from 5-aminolevulinate: step 1/4. Its activity is regulated as follows. Inhibited by divalent lead ions. Functionally, catalyzes an early step in the biosynthesis of tetrapyrroles. Binds two molecules of 5-aminolevulinate per subunit, each at a distinct site, and catalyzes their condensation to form porphobilinogen. This is Delta-aminolevulinic acid dehydratase (HEM2) from Saccharomyces cerevisiae (strain ATCC 204508 / S288c) (Baker's yeast).